A 390-amino-acid polypeptide reads, in one-letter code: MAYPGSPILMKLLVFIFLSTFVVTNVSSETKCREFKSIISFGDSIADTGNLLGLSDPKDLPHMAFPPYGENFFHHPTGRFSNGRLIIDFIAEFLGLPLVPPFYGSHNANFEKGVNFAVGGATALERSFLEDRGIHFPYTNVSLGVQLNSFKESLPSICGSPSDCRDMIENALILMGEIGGNDYNYAFFVDKGIEEIKELMPLVITTISSAITELIGMGGRTFLVPGEFPVGCSVLYLTSHQTSNMEEYDPLTGCLKWLNKFGENHGEQLRAELNRLQKLYPHVNIIYADYYNALFHLYQEPAKFGFMNRPLSACCGAGGPYNYTVGRKCGTDIVESCDDPSKYVAWDGVHMTEAAYRLMAEGILNGPYAIPPFDWSCRSSGVKNSGSSDT.

Residues 1–28 (MAYPGSPILMKLLVFIFLSTFVVTNVSS) form the signal peptide. The active-site Nucleophile is the serine 44. Residues asparagine 140 and asparagine 322 are each glycosylated (N-linked (GlcNAc...) asparagine). Residues aspartate 347 and histidine 350 contribute to the active site.

Belongs to the 'GDSL' lipolytic enzyme family.

It is found in the secreted. This chain is GDSL esterase/lipase At1g28580, found in Arabidopsis thaliana (Mouse-ear cress).